A 433-amino-acid chain; its full sequence is DNA polymerase processivity factor (433 aa).

The disordered stretch occupies residues 274–433; sequence RGDPFDKNYV…VPNTKKQKCG (160 aa). Residues 298-307 show a composition bias toward low complexity; that stretch reads SLSSLANAGG. 2 stretches are compositionally biased toward gly residues: residues 325 to 336 and 344 to 359; these read GLGGLGGGGGGG and GGGGSGTRKMSSGGGG. Positions 360–376 are enriched in basic and acidic residues; it reads GDHDHGLSSKEKYEQHK. The segment covering 385–398 has biased composition (gly residues); sequence GGSGGGGGGGGGGL.

The protein belongs to the herpesviridae polymerase accessory protein family. As to quaternary structure, forms homodimers. Interacts with host SMARCB1. Interacts with host NCL/nucleolin; this interaction is important for the organization of proteins within viral replication compartments. Interacts with UL112/UL113; this interaction is necessary for efficient viral DNA replication. Interacts with UL84. Interacts with the uracil DNA glycosylase UL114. Interacts with the DNA polymerase catalytic subunit UL54. Interacts with host IRF3. Interacts with host RELA. Phosphorylated by UL97 on serine residues, phosphorylation seems important for UL44 nuclear entry but does not directly affect its role in replication. Post-translationally, sumoylated. Sumoylation on Lys-410 increases viral DNA replication.

The protein localises to the virion. It is found in the host nucleus. Accessory subunit of the DNA polymerase that plays an essential role in viral DNA replication and acts by increasing the processivity of polymerization. Forms dimers that binds to double-stranded DNA and UL54 specifically to stimulates long chain DNA synthesis efficiently. Plays an important role in maintaining the structure of viral replication compartments by interacting with host nucleolin/NUC. In addition, suppresses innate immune responses through effects on host IRF3 and NF-kappa-B. Mechanistically, interfere with the binding of IRF3 and the p65 NF-kappa-B subunit to the promoters of antiviral genes, thereby inhibiting the expression of these genes. The chain is DNA polymerase processivity factor (UL44) from Human cytomegalovirus (strain Merlin) (HHV-5).